Reading from the N-terminus, the 222-residue chain is Glutathione S-transferase A5 (222 aa).

The residue at position 2 (Ala2) is an N-acetylalanine. In terms of domain architecture, GST N-terminal spans 3–83 (EKPKLHYSNA…YIASKYNLYG (81 aa)). An N6-succinyllysine modification is found at Lys4. Residues Tyr9, Arg45, 54–55 (QV), and 67–68 (QT) each bind glutathione. Positions 85-208 (DMKERALIDM…QPGSQRKPPM (124 aa)) constitute a GST C-terminal domain.

Belongs to the GST superfamily. Alpha family. Homodimer. Expression not detected.

It is found in the cytoplasm. The enzyme catalyses RX + glutathione = an S-substituted glutathione + a halide anion + H(+). In Homo sapiens (Human), this protein is Glutathione S-transferase A5 (GSTA5).